A 258-amino-acid chain; its full sequence is Isoprenyl transferase (258 aa).

Asp-38 is a catalytic residue. Asp-38 is a binding site for Mg(2+). Substrate-binding positions include 39–42 (GNGR), Trp-43, Arg-51, His-55, and 83–85 (STE). Asn-86 (proton acceptor) is an active-site residue. Substrate contacts are provided by residues Trp-87, Arg-89, Arg-206, and 212 to 214 (RIS). A Mg(2+)-binding site is contributed by Glu-225.

Belongs to the UPP synthase family. Homodimer. Mg(2+) serves as cofactor.

Its function is as follows. Catalyzes the condensation of isopentenyl diphosphate (IPP) with allylic pyrophosphates generating different type of terpenoids. The chain is Isoprenyl transferase from Bacillus anthracis.